The chain runs to 263 residues: Lens fiber major intrinsic protein (263 aa).

Over 1 to 12 (MWELRSASFWRA) the chain is Cytoplasmic. Residues 13-30 (IFAEFFATLFYVFFGLGA) form a helical membrane-spanning segment. At 31 to 40 (SLRWAPGPLH) the chain is on the extracellular side. Residues 41–59 (VLQVALAFGLALATLVQAV) traverse the membrane as a helical segment. Residues 60-63 (GHIS) lie on the Cytoplasmic side of the membrane. An intramembrane region (discontinuously helical) is located at residues 64–76 (GAHVNPAVTFAFL). The NPA 1 motif lies at 68–70 (NPA). Residues 77–85 (VGSQMSLLR) lie on the Cytoplasmic side of the membrane. A helical transmembrane segment spans residues 86–106 (AICYVVAQLLGAVAGAAVLYS). Topologically, residues 107–126 (VTPPAVRGNLALNTLHPGVS) are extracellular. A helical membrane pass occupies residues 127 to 147 (VGQATIVEIFLTLQFVLCIFA). Residues 148 to 157 (TYDERRNGRL) are Cytoplasmic-facing. A helical membrane pass occupies residues 158–175 (GSVALAVGFSLTLGHLFG). At 176–177 (MY) the chain is on the extracellular side. Positions 178 to 193 (YTGAGMNPARSFAPAI) form an intramembrane region, discontinuously helical. The NPA 2 signature appears at 184–186 (NPA). The Extracellular segment spans residues 194 to 200 (LTRNFTN). Residues 201 to 218 (HWVYWVGPVIGAGLGSLL) form a helical membrane-spanning segment. At 219–263 (YDFLLFPRLKSVSERLSILKGTRPSESNGQPEVTGEPVELKTQAL) the chain is on the cytoplasmic side. The segment at 227–237 (LKSVSERLSIL) is interaction with CALM. Ser-235, Ser-243, and Ser-245 each carry phosphoserine. The interval 240–263 (TRPSESNGQPEVTGEPVELKTQAL) is disordered.

Belongs to the MIP/aquaporin (TC 1.A.8) family. In terms of assembly, homotetramer; each monomer provides an independent water pore. Two homotetramers on opposing membranes can dimerize, forming a cell-cell junction. Interacts with CALM; the calcium-calmodulin/CALM complex interacts with the cytoplasmic domains of two aquaporins, leading to channel closure. Interacts with BFSP1 (via C-terminus); prevents calcium-dependent inhibition of the water channel activity. Post-translationally, subject to partial proteolytic cleavage in the eye lens core. Partial proteolysis promotes interactions between tetramers from adjoining membranes. In terms of processing, fatty acylated at Met-1 and Lys-238. The acyl modifications, in decreasing order of ion abundance, are: oleoyl (C18:1) &gt; palmitoyl (C16:0) &gt; stearoyl (C18:0) &gt; eicosenoyl (C20:1) &gt; dihomo-gamma-linolenoyl (C20:3) &gt; palmitoleoyl (C16:1) &gt; eicosadienoyl (C20:2). As to expression, detected in eye lens (at protein level).

Its subcellular location is the cell membrane. It is found in the cell junction. The enzyme catalyses H2O(in) = H2O(out). With respect to regulation, the water channel activity is inhibited by calcium through calmodulin/CALM. In terms of biological role, aquaporins form homotetrameric transmembrane channels, with each monomer independently mediating water transport across the plasma membrane along its osmotic gradient. Specifically expressed in lens fiber cells, this aquaporin is crucial for maintaining lens water homeostasis and transparency. Beyond water permeability, it also acts as a cell-to-cell adhesion molecule, forming thin junctions between lens fiber cells that are essential for maintaining the ordered structure and transparency of the lens. This chain is Lens fiber major intrinsic protein, found in Ovis aries (Sheep).